Consider the following 185-residue polypeptide: Elongation factor P (185 aa).

Belongs to the elongation factor P family.

Its subcellular location is the cytoplasm. The protein operates within protein biosynthesis; polypeptide chain elongation. In terms of biological role, involved in peptide bond synthesis. Stimulates efficient translation and peptide-bond synthesis on native or reconstituted 70S ribosomes in vitro. Probably functions indirectly by altering the affinity of the ribosome for aminoacyl-tRNA, thus increasing their reactivity as acceptors for peptidyl transferase. This chain is Elongation factor P, found in Lysinibacillus sphaericus (strain C3-41).